The chain runs to 771 residues: MRLYLFTLLVTVFSGVSTKSPIFGPQEVSSIEGDSVSITCYYPDTSVNRHTRKYWCRQGASGMCTTLISSNGYLSKEYSGRANLINFPENNTFVINIEQLTQDDTGSYKCGLGTSNRGLSFDVSLEVSQVPELPSDTHVYTKDIGRNVTIECPFKRENAPSKKSLCKKTNQSCELVIDSTEKVNPSYIGRAKLFMKGTDLTVFYVNISHLTHNDAGLYICQAGEGPSADKKNVDLQVLAPEPELLYKDLRSSVTFECDLGREVANEAKYLCRMNKETCDVIINTLGKRDPDFEGRILITPKDDNGRFSVLITGLRKEDAGHYQCGAHSSGLPQEGWPIQTWQLFVNEESTIPNRRSVVKGVTGGSVAIACPYNPKESSSLKYWCRWEGDGNGHCPVLVGTQAQVQEEYEGRLALFDQPGNGTYTVILNQLTTEDAGFYWCLTNGDSRWRTTIELQVAEATREPNLEVTPQNATAVLGETFTVSCHYPCKFYSQEKYWCKWSNKGCHILPSHDEGARQSSVSCDQSSQLVSMTLNPVSKEDEGWYWCGVKQGQTYGETTAIYIAVEERTRGSSHVNPTDANARAKVALEEEVVDSSISEKENKAIPNPGPFANEREIQNVGDQAQENRASGDAGSADGQSRSSSSKVLFSTLVPLGLVLAVGAIAVWVARVRHRKNVDRMSISSYRTDISMADFKNSRDLGGNDNMGASPDTQQTVIEGKDEIVTTTECTAEPEESKKAKRSSKEEADMAYSAFLLQSSTIAAQVHDGPQEA.

A signal peptide spans 1–18; it reads MRLYLFTLLVTVFSGVST. The Extracellular portion of the chain corresponds to 19–645; sequence KSPIFGPQEV…DGQSRSSSSK (627 aa). One can recognise an Ig-like V-type 1; required for binding to polymeric IgA and IgM domain in the interval 21–120; the sequence is PIFGPQEVSS…GLGTSNRGLS (100 aa). Cys40 and Cys110 are disulfide-bonded. N-linked (GlcNAc...) asparagine glycans are attached at residues Asn90, Asn147, Asn170, and Asn206. 4 Ig-like V-type domains span residues 135–237, 245–351, 352–457, and 463–563; these read SDTH…DLQV, LYKD…ESTI, PNRR…LQVA, and PNLE…IYIA. 3 disulfides stabilise this stretch: Cys152-Cys220, Cys257-Cys324, and Cys370-Cys440. Asn420 and Asn471 each carry an N-linked (GlcNAc...) asparagine glycan. The cysteines at positions 484 and 546 are disulfide-linked. The disordered stretch occupies residues 622–641; sequence QAQENRASGDAGSADGQSRS. The segment covering 627-641 has biased composition (low complexity); sequence RASGDAGSADGQSRS. Residues 646 to 668 traverse the membrane as a helical segment; it reads VLFSTLVPLGLVLAVGAIAVWVA. The Cytoplasmic portion of the chain corresponds to 669-771; the sequence is RVRHRKNVDR…AQVHDGPQEA (103 aa). A phosphoserine mark is found at Ser680, Ser689, Ser696, and Ser742.

In terms of assembly, interacts (mainly via CDR1-like domain) with dimeric IgA. Interacts (mainly via CDR2-like domain) with pentameric IgM. As to quaternary structure, either free or part of the secretory IgA (sIgA) complex that consists of two, four or five IgA monomers, and two additional non-Ig polypeptides, namely the JCHAIN and the secretory component (the proteolytic product of PIGR). Free secretory component interacts with bacterial antigens toxA of C.difficile and eae of E.coli. N-glycosylated. N-glycosylation is required for anchoring IgA molecules to mucus, but is not necessary for Ig binding.

The protein resides in the cell membrane. Its subcellular location is the secreted. Its function is as follows. Mediates selective transcytosis of polymeric IgA and IgM across mucosal epithelial cells. Binds polymeric IgA and IgM at the basolateral surface of epithelial cells. The complex is then transported across the cell to be secreted at the apical surface. During this process, a cleavage occurs that separates the extracellular (known as the secretory component) from the transmembrane segment. Through its N-linked glycans ensures anchoring of secretory IgA (sIgA) molecules to mucus lining the epithelial surface to neutralize extracellular pathogens. On its own (free form) may act as a non-specific microbial scavenger to prevent pathogen interaction with epithelial cells. The sequence is that of Polymeric immunoglobulin receptor (Pigr) from Mus musculus (Mouse).